Reading from the N-terminus, the 206-residue chain is MAMLSSRRVAAPAKASAIRRSRVMPVVRAAAASSEVPDMNKRNIMNLILAGGAGLPITTLALGYGAFFVPPSSGGGGGGQAAKDALGNDIKAGEWLKTHLAGDRSLSQGLKGDPTYLIVTADSTIEKYGLNAVCTHLGCVVPWVAAENKFKCPCHGSQYNAEGKVVRGPAPLSLALAHCDVAESGLVTFSTWTETDFRTGLEPWWA.

The N-terminal 29 residues, 1–29 (MAMLSSRRVAAPAKASAIRRSRVMPVVRA), are a transit peptide targeting the chloroplast. Residues 39 to 68 (MNKRNIMNLILAGGAGLPITTLALGYGAFF) traverse the membrane as a helical segment. The 97-residue stretch at 92 to 188 (AGEWLKTHLA…CDVAESGLVT (97 aa)) folds into the Rieske domain. Residues Cys-134, His-136, Cys-152, and His-155 each coordinate [2Fe-2S] cluster. A disulfide bond links Cys-139 and Cys-154.

The protein belongs to the Rieske iron-sulfur protein family. In terms of assembly, the 4 large subunits of the cytochrome b6-f complex are cytochrome b6, subunit IV (17 kDa polypeptide, petD), cytochrome f and the Rieske protein, while the 4 small subunits are petG, petL, petM and petN. The complex functions as a dimer. Requires [2Fe-2S] cluster as cofactor.

It localises to the plastid. Its subcellular location is the chloroplast thylakoid membrane. It carries out the reaction 2 oxidized [plastocyanin] + a plastoquinol + 2 H(+)(in) = 2 reduced [plastocyanin] + a plastoquinone + 4 H(+)(out). Component of the cytochrome b6-f complex, which mediates electron transfer between photosystem II (PSII) and photosystem I (PSI), cyclic electron flow around PSI, and state transitions. The polypeptide is Cytochrome b6-f complex iron-sulfur subunit, chloroplastic (petC) (Chlamydomonas reinhardtii (Chlamydomonas smithii)).